We begin with the raw amino-acid sequence, 365 residues long: Alanine racemase (365 aa).

Residue Lys32 is the Proton acceptor; specific for D-alanine of the active site. Residue Lys32 is modified to N6-(pyridoxal phosphate)lysine. Arg128 is a substrate binding site. Catalysis depends on Tyr257, which acts as the Proton acceptor; specific for L-alanine. Met305 is a binding site for substrate.

It belongs to the alanine racemase family. Requires pyridoxal 5'-phosphate as cofactor.

It carries out the reaction L-alanine = D-alanine. It participates in amino-acid biosynthesis; D-alanine biosynthesis; D-alanine from L-alanine: step 1/1. Catalyzes the interconversion of L-alanine and D-alanine. May also act on other amino acids. The sequence is that of Alanine racemase (alr) from Francisella tularensis subsp. holarctica (strain FTNF002-00 / FTA).